Here is a 506-residue protein sequence, read N- to C-terminus: Lysine--tRNA ligase (506 aa).

Residues Glu-416 and Glu-423 each contribute to the Mg(2+) site.

This sequence belongs to the class-II aminoacyl-tRNA synthetase family. In terms of assembly, homodimer. Mg(2+) serves as cofactor.

The protein resides in the cytoplasm. The enzyme catalyses tRNA(Lys) + L-lysine + ATP = L-lysyl-tRNA(Lys) + AMP + diphosphate. The polypeptide is Lysine--tRNA ligase (Bordetella bronchiseptica (strain ATCC BAA-588 / NCTC 13252 / RB50) (Alcaligenes bronchisepticus)).